The primary structure comprises 352 residues: Photosystem II protein D1 (352 aa).

Thr2 bears the N-acetylthreonine mark. Thr2 carries the post-translational modification Phosphothreonine. Transmembrane regions (helical) follow at residues 29 to 46 (YIGW…TATS), 118 to 133 (HFFL…EWEL), and 142 to 156 (WIAV…AATA). Position 118 (His118) interacts with chlorophyll a. Tyr126 is a pheophytin a binding site. Residues Asp170 and Glu189 each coordinate [CaMn4O5] cluster. A helical membrane pass occupies residues 197–218 (FHMLGVAGVFGGSLFSAMHGSL). His198 lines the chlorophyll a pocket. Residues His215 and 264–265 (SF) contribute to the a quinone site. Position 215 (His215) interacts with Fe cation. His272 is a Fe cation binding site. The helical transmembrane segment at 274-288 (FLAAWPVVGIWFTAL) threads the bilayer. [CaMn4O5] cluster contacts are provided by His332, Glu333, Asp342, and Ala344. Residues 345–352 (SVEAPSIA) constitute a propeptide that is removed on maturation.

It belongs to the reaction center PufL/M/PsbA/D family. In terms of assembly, PSII is composed of 1 copy each of membrane proteins PsbA, PsbB, PsbC, PsbD, PsbE, PsbF, PsbH, PsbI, PsbJ, PsbK, PsbL, PsbM, PsbT, PsbX, PsbY, PsbZ, Psb30/Ycf12, at least 3 peripheral proteins of the oxygen-evolving complex and a large number of cofactors. It forms dimeric complexes. The D1/D2 heterodimer binds P680, chlorophylls that are the primary electron donor of PSII, and subsequent electron acceptors. It shares a non-heme iron and each subunit binds pheophytin, quinone, additional chlorophylls, carotenoids and lipids. D1 provides most of the ligands for the Mn4-Ca-O5 cluster of the oxygen-evolving complex (OEC). There is also a Cl(-1) ion associated with D1 and D2, which is required for oxygen evolution. The PSII complex binds additional chlorophylls, carotenoids and specific lipids. is required as a cofactor. Tyr-161 forms a radical intermediate that is referred to as redox-active TyrZ, YZ or Y-Z. Post-translationally, C-terminally processed by CTPA; processing is essential to allow assembly of the oxygen-evolving complex and thus photosynthetic growth.

The protein resides in the plastid. The protein localises to the chloroplast thylakoid membrane. The catalysed reaction is 2 a plastoquinone + 4 hnu + 2 H2O = 2 a plastoquinol + O2. In terms of biological role, photosystem II (PSII) is a light-driven water:plastoquinone oxidoreductase that uses light energy to abstract electrons from H(2)O, generating O(2) and a proton gradient subsequently used for ATP formation. It consists of a core antenna complex that captures photons, and an electron transfer chain that converts photonic excitation into a charge separation. The D1/D2 (PsbA/PsbD) reaction center heterodimer binds P680, the primary electron donor of PSII as well as several subsequent electron acceptors. The protein is Photosystem II protein D1 of Chlorella ellipsoidea.